Consider the following 858-residue polypeptide: MYPEGPKPEHDQFPLQDTQFSNQPPVHRSPFEDPYPEDQPHFDKQPLLTSPAYPPTQYPTSPPPPNFPGSPAVQQPYPPFNNNPSPVSPGVPAYFNPAPPSPNMHYGQAPRRQPRRFKTTRQVKLTKGNLVLDCPVPTAYLNDVPIKDGKEFTHMRYTAATCDPKDFASDGYTLRQPMLGRKTELFIVLTMYNEDEVLFARTMHGVMKNIAHLCTRDRSRTWGPNGWEKVVVCIVSDGRNKINQRTLSVLALLGVYQDGIAKNVVHGKPVTAHIYEYTTQVSVDPNMEVKKAGSKNVVPCQILFCLKEKNQKKINSHRWFFQAFGPVIDPHICVLIDVGTKPGGTSIYHLWKAFDINSNIAGACGEIRAMAGTRGVALLNPLVAAQNFEYKMSNILDKPLESVFGYISVLPGAFSAYRFKALQNDVNGHGPLEKYFLGETQHGGDADIFTANMYLAEDRILCYELVAKKEAHWVLHYVSSSYGETDVPDKVDEFISQRRRWLNGSFFAGVYALYHWRKVWQSDHSYLRKMMFMVEDIYNTYNLIFSWFALGNFYLTFFILTKALGHGVDGSTLTDPPFSPDTGETLHTVFNYIYIVLIVIQFIMALGNRPQGSKIAYTSSMVFFAILMVYMMFAAIWITVVGVKTVVETSGGQFIEMLEQSTFRNIIISLCATYVMYFVSSFMFLDPWHMFTSFIQYILLSPSYTNVLNIYAFCNTHDVSWGTKGDNTVATDLGVVKAKKDGSGDLAVEVEVPVEEKDINAAFIDAQVELTKKIEPEKSHRDAKTKQEDYYRSFRTRLVLAWIISNLALVVAIANTTVIDIKGKASIYLGFILWSVAGLSVIRFTGSTLYLIFKIFTG.

Positions 1–12 (MYPEGPKPEHDQ) are enriched in basic and acidic residues. A disordered region spans residues 1 to 116 (MYPEGPKPEH…GQAPRRQPRR (116 aa)). Polar residues predominate over residues 15–24 (LQDTQFSNQP). Composition is skewed to pro residues over residues 52-68 (AYPP…PNFP) and 76-89 (PYPP…PVSP). A run of 7 helical transmembrane segments spans residues 500-517 (RWLN…YHWR), 540-560 (TYNL…FFIL), 586-606 (LHTV…IMAL), 621-641 (MVFF…ITVV), 665-685 (NIII…FMFL), 799-819 (VLAW…TTVI), and 825-845 (ASIY…IRFT).

This sequence belongs to the chitin synthase family.

Its subcellular location is the cell membrane. The catalysed reaction is [(1-&gt;4)-N-acetyl-beta-D-glucosaminyl](n) + UDP-N-acetyl-alpha-D-glucosamine = [(1-&gt;4)-N-acetyl-beta-D-glucosaminyl](n+1) + UDP + H(+). Polymerizes chitin, a structural polymer of the cell wall and septum, by transferring the sugar moiety of UDP-GlcNAc to the non-reducing end of the growing chitin polymer. The chain is Chitin synthase 2 (CHS2) from Rhizopus oligosporus (Rhizopus microsporus var. oligosporus).